The following is a 458-amino-acid chain: Phosphoglucosamine mutase (458 aa).

The active-site Phosphoserine intermediate is S108. Residues S108, D247, D249, and D251 each contribute to the Mg(2+) site. S108 is modified (phosphoserine).

It belongs to the phosphohexose mutase family. Mg(2+) is required as a cofactor. In terms of processing, activated by phosphorylation.

The enzyme catalyses alpha-D-glucosamine 1-phosphate = D-glucosamine 6-phosphate. Catalyzes the conversion of glucosamine-6-phosphate to glucosamine-1-phosphate. In Nitrosomonas eutropha (strain DSM 101675 / C91 / Nm57), this protein is Phosphoglucosamine mutase.